The following is a 365-amino-acid chain: MNKVALYCRPGFEKECAAEITDKAGQIGVYGFSRVKEGSGYVIFECYQEGDADKIARDVDFRGLIFARQLFVCGELLKNLPPEDRITPIIDQLKGSTEKAGELRVEVADTNESKELLKFCRKFTVPLRNQLRKEKILLKVENYSRPVIHVFFIAPGCCYVGYSYSFNNSPFYMGIPRLKFPADAPSRSTLKLEEAFHVFIPYEEWEERLASGMSAVDLGACPGGWTYQLVKRSMMVHAVDNGPMAPSLMETGQVRHHQADGFKFEPTSKNITWLVCDMVEKPAKVAALMTTWIVNEWCREAIFNLKLPMKKRYEEVAHILDKIRAELAEKGINAKIQAKHLYHDREEITVHIQNIWAAYRPDREF.

S-adenosyl-L-methionine contacts are provided by residues serine 188, 221-224 (CPGG), aspartate 240, aspartate 260, and aspartate 277. The active-site Proton acceptor is lysine 306.

Belongs to the class I-like SAM-binding methyltransferase superfamily. RNA methyltransferase RlmE family. RlmM subfamily. As to quaternary structure, monomer.

The protein localises to the cytoplasm. The enzyme catalyses cytidine(2498) in 23S rRNA + S-adenosyl-L-methionine = 2'-O-methylcytidine(2498) in 23S rRNA + S-adenosyl-L-homocysteine + H(+). Catalyzes the 2'-O-methylation at nucleotide C2498 in 23S rRNA. This chain is Ribosomal RNA large subunit methyltransferase M, found in Proteus mirabilis (strain HI4320).